The primary structure comprises 50 residues: Large ribosomal subunit protein eL40 (50 aa).

It belongs to the eukaryotic ribosomal protein eL40 family.

The chain is Large ribosomal subunit protein eL40 from Aeropyrum pernix (strain ATCC 700893 / DSM 11879 / JCM 9820 / NBRC 100138 / K1).